The primary structure comprises 313 residues: GTP cyclohydrolase MptA (313 aa).

It belongs to the GTP cyclohydrolase IV family. As to quaternary structure, homodimer. Fe(2+) is required as a cofactor.

It catalyses the reaction GTP + H2O = 7,8-dihydroneopterin 2',3'-cyclic phosphate + formate + diphosphate + H(+). It participates in cofactor biosynthesis; 5,6,7,8-tetrahydromethanopterin biosynthesis. Converts GTP to 7,8-dihydro-D-neopterin 2',3'-cyclic phosphate, the first intermediate in the biosynthesis of coenzyme methanopterin. The chain is GTP cyclohydrolase MptA from Methanosphaera stadtmanae (strain ATCC 43021 / DSM 3091 / JCM 11832 / MCB-3).